We begin with the raw amino-acid sequence, 143 residues long: High mobility group protein B (143 aa).

The segment at 1 to 22 (MSKAASQYATLEDLPSKPKRPQ) is disordered. Residues 18-86 (PKRPQTGFFI…TYDKQNDQWK (69 aa)) constitute a DNA-binding region (HMG box). Alanine 70 is modified (blocked amino end (Ala)). 2 stretches are compositionally biased toward basic and acidic residues: residues 100-120 (AKKA…ELEK) and 131-143 (AKKD…AKKK). A disordered region spans residues 100–143 (AKKALKEKTKKSKAAEKELEKSKKKAPAAAPAKKDDKKAPAKKK).

The protein localises to the nucleus. The protein resides in the chromosome. This is High mobility group protein B from Tetrahymena thermophila.